A 76-amino-acid polypeptide reads, in one-letter code: uORF2 protein (76 aa).

Functionally, plays a role in viral replication. The polypeptide is uORF2 protein (Homo sapiens (Human)).